The primary structure comprises 597 residues: Alkyldihydroxyacetonephosphate synthase (597 aa).

The FAD-binding PCMH-type domain occupies 131 to 313; it reads IPRLPDIVVW…SEVTIKIFPI (183 aa). FAD-binding positions include 163–169, 232–238, 245–248, and 297–303; these read PIGGGTS, DSIEFST, TRAS, and EGTLGVV. Residue Arg-444 coordinates substrate. Tyr-507 functions as the Proton donor/acceptor in the catalytic mechanism. The tract at residues 544–546 is important for enzyme activity; the sequence is HHH. The short motif at 595-597 is the Microbody targeting signal element; sequence CKL.

This sequence belongs to the FAD-binding oxidoreductase/transferase type 4 family. Homodimer. Requires FAD as cofactor.

It localises to the peroxisome. The catalysed reaction is a long chain fatty alcohol + a 1-acylglycerone 3-phosphate = a 1-O-alkylglycerone 3-phosphate + a long-chain fatty acid + H(+). The protein operates within glycerolipid metabolism; ether lipid biosynthesis. Functionally, catalyzes the exchange of an acyl for a long-chain alkyl group and the formation of the ether bond in the biosynthesis of ether phospholipids. This chain is Alkyldihydroxyacetonephosphate synthase (ads-1), found in Caenorhabditis elegans.